Consider the following 185-residue polypeptide: ATP synthase subunit delta (185 aa).

Belongs to the ATPase delta chain family. In terms of assembly, F-type ATPases have 2 components, F(1) - the catalytic core - and F(0) - the membrane proton channel. F(1) has five subunits: alpha(3), beta(3), gamma(1), delta(1), epsilon(1). CF(0) has four main subunits: a(1), b(1), b'(1) and c(10-14). The alpha and beta chains form an alternating ring which encloses part of the gamma chain. F(1) is attached to F(0) by a central stalk formed by the gamma and epsilon chains, while a peripheral stalk is formed by the delta, b and b' chains.

It localises to the cellular thylakoid membrane. In terms of biological role, f(1)F(0) ATP synthase produces ATP from ADP in the presence of a proton or sodium gradient. F-type ATPases consist of two structural domains, F(1) containing the extramembraneous catalytic core and F(0) containing the membrane proton channel, linked together by a central stalk and a peripheral stalk. During catalysis, ATP synthesis in the catalytic domain of F(1) is coupled via a rotary mechanism of the central stalk subunits to proton translocation. This protein is part of the stalk that links CF(0) to CF(1). It either transmits conformational changes from CF(0) to CF(1) or is implicated in proton conduction. The protein is ATP synthase subunit delta of Acaryochloris marina (strain MBIC 11017).